A 361-amino-acid chain; its full sequence is Hydroxymethylglutaryl-CoA synthase (361 aa).

E92 serves as the catalytic Proton donor/acceptor. Catalysis depends on C124, which acts as the Acyl-thioester intermediate. (3S)-3-hydroxy-3-methylglutaryl-CoA-binding residues include C124, S165, T214, and H247. H247 acts as the Proton donor/acceptor in catalysis. CoA is bound at residue K252. Positions 256, 279, and 309 each coordinate (3S)-3-hydroxy-3-methylglutaryl-CoA.

It belongs to the thiolase-like superfamily. Archaeal HMG-CoA synthase family. Interacts with acetoacetyl-CoA thiolase that catalyzes the precedent step in the pathway and with a DUF35 protein. The acetoacetyl-CoA thiolase/HMG-CoA synthase complex channels the intermediate via a fused CoA-binding site, which allows for efficient coupling of the endergonic thiolase reaction with the exergonic HMGCS reaction.

It carries out the reaction acetoacetyl-CoA + acetyl-CoA + H2O = (3S)-3-hydroxy-3-methylglutaryl-CoA + CoA + H(+). It functions in the pathway metabolic intermediate biosynthesis; (R)-mevalonate biosynthesis; (R)-mevalonate from acetyl-CoA: step 2/3. In terms of biological role, catalyzes the condensation of acetyl-CoA with acetoacetyl-CoA to form 3-hydroxy-3-methylglutaryl-CoA (HMG-CoA). Functions in the mevalonate (MVA) pathway leading to isopentenyl diphosphate (IPP), a key precursor for the biosynthesis of isoprenoid compounds that are building blocks of archaeal membrane lipids. This Aeropyrum pernix (strain ATCC 700893 / DSM 11879 / JCM 9820 / NBRC 100138 / K1) protein is Hydroxymethylglutaryl-CoA synthase.